The primary structure comprises 89 residues: MGLEDERKMLTGSGDPKEEEEEELVDPLTTVREHCEQLEKCVKARERLESCDRRVSSRSQTEEDCTEELFDFLHARDHCVAHKLFKSLK.

The N-terminal 13 residues, 1 to 13 (MGLEDERKMLTGS), are a transit peptide targeting the mitochondrion. Residues 1 to 27 (MGLEDERKMLTGSGDPKEEEEEELVDP) are disordered. 2 cysteine pairs are disulfide-bonded: C35–C79 and C51–C65. K40 carries the post-translational modification N6-acetyllysine. The residue at position 83 (K83) is an N6-acetyllysine.

The protein belongs to the UQCRH/QCR6 family. In terms of assembly, component of the ubiquinol-cytochrome c oxidoreductase (cytochrome b-c1 complex, complex III, CIII), a multisubunit enzyme composed of 11 subunits. The complex is composed of 3 respiratory subunits cytochrome b, cytochrome c1 and Rieske protein UQCRFS1, 2 core protein subunits UQCRC1/QCR1 and UQCRC2/QCR2, and 6 low-molecular weight protein subunits UQCRH/QCR6, UQCRB/QCR7, UQCRQ/QCR8, UQCR10/QCR9, UQCR11/QCR10 and subunit 9, the cleavage product of Rieske protein UQCRFS1. The complex exists as an obligatory dimer and forms supercomplexes (SCs) in the inner mitochondrial membrane with NADH-ubiquinone oxidoreductase (complex I, CI) and cytochrome c oxidase (complex IV, CIV), resulting in different assemblies (supercomplex SCI(1)III(2)IV(1) and megacomplex MCI(2)III(2)IV(2)).

Its subcellular location is the mitochondrion inner membrane. Its function is as follows. Component of the ubiquinol-cytochrome c oxidoreductase, a multisubunit transmembrane complex that is part of the mitochondrial electron transport chain which drives oxidative phosphorylation. The respiratory chain contains 3 multisubunit complexes succinate dehydrogenase (complex II, CII), ubiquinol-cytochrome c oxidoreductase (cytochrome b-c1 complex, complex III, CIII) and cytochrome c oxidase (complex IV, CIV), that cooperate to transfer electrons derived from NADH and succinate to molecular oxygen, creating an electrochemical gradient over the inner membrane that drives transmembrane transport and the ATP synthase. The cytochrome b-c1 complex catalyzes electron transfer from ubiquinol to cytochrome c, linking this redox reaction to translocation of protons across the mitochondrial inner membrane, with protons being carried across the membrane as hydrogens on the quinol. In the process called Q cycle, 2 protons are consumed from the matrix, 4 protons are released into the intermembrane space and 2 electrons are passed to cytochrome c. In Rattus norvegicus (Rat), this protein is Cytochrome b-c1 complex subunit 6, mitochondrial (Uqcrh).